Here is a 327-residue protein sequence, read N- to C-terminus: Peptidyl-prolyl isomerase CWC27 (327 aa).

A PPIase cyclophilin-type domain is found at 8-158 (TTAKVALITT…YPAEITDIKI (151 aa)). The interval 223–307 (ANKKKGPSEN…IDSDYDSDLD (85 aa)) is disordered. 2 stretches are compositionally biased toward basic and acidic residues: residues 228 to 269 (GPSE…ENET) and 277 to 296 (MNHE…DRNP).

It belongs to the cyclophilin-type PPIase family. CWC27 subfamily. In terms of assembly, associated with the spliceosome.

The protein resides in the cytoplasm. It localises to the nucleus. The catalysed reaction is [protein]-peptidylproline (omega=180) = [protein]-peptidylproline (omega=0). In terms of biological role, PPIases accelerate the folding of proteins. It catalyzes the cis-trans isomerization of proline imidic peptide bonds in oligopeptides. Involved in pre-mRNA splicing. This is Peptidyl-prolyl isomerase CWC27 (CWC27) from Debaryomyces hansenii (strain ATCC 36239 / CBS 767 / BCRC 21394 / JCM 1990 / NBRC 0083 / IGC 2968) (Yeast).